We begin with the raw amino-acid sequence, 317 residues long: Beta-ketoacyl-[acyl-carrier-protein] synthase III (317 aa).

Active-site residues include Cys-112 and His-244. Positions Gln-245 to Arg-249 are ACP-binding. Asn-274 is an active-site residue.

The protein belongs to the thiolase-like superfamily. FabH family. Homodimer.

Its subcellular location is the cytoplasm. The catalysed reaction is malonyl-[ACP] + acetyl-CoA + H(+) = 3-oxobutanoyl-[ACP] + CO2 + CoA. It participates in lipid metabolism; fatty acid biosynthesis. Functionally, catalyzes the condensation reaction of fatty acid synthesis by the addition to an acyl acceptor of two carbons from malonyl-ACP. Catalyzes the first condensation reaction which initiates fatty acid synthesis and may therefore play a role in governing the total rate of fatty acid production. Possesses both acetoacetyl-ACP synthase and acetyl transacylase activities. Its substrate specificity determines the biosynthesis of branched-chain and/or straight-chain of fatty acids. The sequence is that of Beta-ketoacyl-[acyl-carrier-protein] synthase III from Pectobacterium atrosepticum (strain SCRI 1043 / ATCC BAA-672) (Erwinia carotovora subsp. atroseptica).